The primary structure comprises 239 residues: Ribonuclease PH (239 aa).

Residues arginine 86 and 124–126 (GTR) contribute to the phosphate site.

This sequence belongs to the RNase PH family. Homohexameric ring arranged as a trimer of dimers.

The catalysed reaction is tRNA(n+1) + phosphate = tRNA(n) + a ribonucleoside 5'-diphosphate. Functionally, phosphorolytic 3'-5' exoribonuclease that plays an important role in tRNA 3'-end maturation. Removes nucleotide residues following the 3'-CCA terminus of tRNAs; can also add nucleotides to the ends of RNA molecules by using nucleoside diphosphates as substrates, but this may not be physiologically important. Probably plays a role in initiation of 16S rRNA degradation (leading to ribosome degradation) during starvation. The chain is Ribonuclease PH from Allorhizobium ampelinum (strain ATCC BAA-846 / DSM 112012 / S4) (Agrobacterium vitis (strain S4)).